A 503-amino-acid polypeptide reads, in one-letter code: Legumin J (503 aa).

The N-terminal stretch at 1 to 22 (MSKPFLSLLSLSLLLFASACLA) is a signal peptide. 2 disulfides stabilise this stretch: Cys-33–Cys-66 and Cys-109–Cys-329. Positions 38-257 (INALEPDHRV…TFNTEEDTAK (220 aa)) constitute a Cupin type-1 1 domain. Disordered regions lie at residues 111–140 (ETYE…RRFR), 185–235 (FYLG…EGNS), and 253–323 (EDTA…RKNG). Positions 118 to 129 (SSQSRQESRQQQ) are enriched in low complexity. Basic and acidic residues-rich tracts occupy residues 254 to 268 (DTAK…ERSQ) and 282 to 300 (KGKE…HREE). Residues 301–312 (KEEEEEEEEDEE) show a composition bias toward acidic residues. Residues 313–323 (EKQRSEERKNG) are compositionally biased toward basic and acidic residues. The 148-residue stretch at 335–482 (ENIADAARAD…AFGLRQRQVT (148 aa)) folds into the Cupin type-1 2 domain.

It belongs to the 11S seed storage protein (globulins) family. In terms of assembly, hexamer; each subunit is composed of an acidic and a basic chain derived from a single precursor and linked by a disulfide bond.

This protein found in the seeds of many leguminous and non-leguminous plants is the source of sulfur-containing amino acids in seed meals. This Pisum sativum (Garden pea) protein is Legumin J (LEGJ).